A 294-amino-acid chain; its full sequence is 4-hydroxy-tetrahydrodipicolinate synthase (294 aa).

T48 contributes to the pyruvate binding site. Y136 functions as the Proton donor/acceptor in the catalytic mechanism. The active-site Schiff-base intermediate with substrate is K164. Pyruvate is bound at residue I206.

This sequence belongs to the DapA family. As to quaternary structure, homotetramer; dimer of dimers.

The protein localises to the cytoplasm. It carries out the reaction L-aspartate 4-semialdehyde + pyruvate = (2S,4S)-4-hydroxy-2,3,4,5-tetrahydrodipicolinate + H2O + H(+). Its pathway is amino-acid biosynthesis; L-lysine biosynthesis via DAP pathway; (S)-tetrahydrodipicolinate from L-aspartate: step 3/4. Catalyzes the condensation of (S)-aspartate-beta-semialdehyde [(S)-ASA] and pyruvate to 4-hydroxy-tetrahydrodipicolinate (HTPA). This is 4-hydroxy-tetrahydrodipicolinate synthase from Phenylobacterium zucineum (strain HLK1).